We begin with the raw amino-acid sequence, 79 residues long: UPF0180 protein BCG9842_B3897 (79 aa).

The protein belongs to the UPF0180 family.

This is UPF0180 protein BCG9842_B3897 from Bacillus cereus (strain G9842).